The chain runs to 823 residues: Adhesion G protein-coupled receptor E2 (823 aa).

The signal sequence occupies residues 1–23 (MGGRVFLVFLAFCVWLTLPGAET). The Extracellular segment spans residues 24-540 (QDSRGCARWC…EEDPVLTVIT (517 aa)). One can recognise an EGF-like 1 domain in the interval 25-66 (DSRGCARWCPQDSSCVNATACRCNPGFSSFSEIITTPMETCD). Cystine bridges form between C29–C39, C33–C45, C47–C65, C71–C85, C79–C94, C96–C117, C123–C136, C130–C145, C147–C161, C167–C180, C174–C189, C191–C210, C216–C229, C223–C238, and C240–C259. N-linked (GlcNAc...) asparagine glycosylation occurs at N41. In terms of domain architecture, EGF-like 2; calcium-binding spans 67-118 (DINECATLSKVSCGKFSDCWNTEGSYDCVCSPGYEPVSGAKTFKNESENTCQ). N111 carries an N-linked (GlcNAc...) asparagine glycan. One can recognise an EGF-like 3; calcium-binding domain in the interval 119 to 162 (DVDECQQNPRLCKSYGTCVNTLGSYTCQCLPGFKLKPEDPKLCT). The EGF-like 4; calcium-binding domain maps to 163–211 (DVNECTSGQNPCHSSTHCLNNVGSYQCRCRPGWQPIPGSPNGPNNTVCE). N-linked (GlcNAc...) asparagine glycosylation occurs at N206. Positions 212-260 (DVDECSSGQHQCDSSTVCFNTVGSYSCRCRPGWKPRHGIPNNQKDTVCE) constitute an EGF-like 5; calcium-binding domain. Residues N298, N347, N354, N456, and N460 are each glycosylated (N-linked (GlcNAc...) asparagine). In terms of domain architecture, GAIN-B spans 354–530 (NFSYPAGTEL…AVLMAHYDVQ (177 aa)). 2 disulfide bridges follow: C482-C512 and C500-C514. A GPS region spans residues 482–530 (CVFWEHGQNGCGHWATTGCSTIGTRDTSTICRCTHLSSFAVLMAHYDVQ). The helical transmembrane segment at 541 to 561 (YMGLSVSLLCLLLAALTFLLC) threads the bilayer. Residues 562–569 (KAIQNTST) are Cytoplasmic-facing. A helical transmembrane segment spans residues 570–590 (SLHLQLSLCLFLAHLLFLVAI). The Extracellular segment spans residues 591–605 (DQTGHKVLCSIIAGT). A helical membrane pass occupies residues 606–626 (LHYLYLATLTWMLLEALYLFL). Residues 627-644 (TARNLTVVNYSSINRFMK) are Cytoplasmic-facing. Residues 645–665 (KLMFPVGYGVPAVTVAISAAS) form a helical membrane-spanning segment. Topologically, residues 666-683 (RPHLYGTPSRCWLQPEKG) are extracellular. A helical transmembrane segment spans residues 684–704 (FIWGFLGPVCAIFSVNLVLFL). Over 705–735 (VTLWILKNRLSSLNSEVSTLRNTRMLAFKAT) the chain is Cytoplasmic. A helical membrane pass occupies residues 736 to 756 (AQLFILGCTWCLGILQVGPAA). Topologically, residues 757 to 760 (RVMA) are extracellular. A helical transmembrane segment spans residues 761 to 781 (YLFTIINSLQGVFIFLVYCLL). Topologically, residues 782 to 823 (SQQVREQYGKWSKGIRKLKTESEMHTLSSSAKADTSKPSTVN) are cytoplasmic.

It belongs to the G-protein coupled receptor 2 family. Adhesion G-protein coupled receptor (ADGR) subfamily. Forms a heterodimer, consisting of a large extracellular region non-covalently linked to a seven-transmembrane moiety. Interacts with chondroitin sulfate; the interaction with chondroitin sulfate is calcium-dependent. Interacts with CD55. Autoproteolytically cleaved into 2 subunits, an extracellular alpha subunit and a seven-transmembrane beta subunit. Expression is restricted to myeloid cells. Highest expression was found in peripheral blood leukocytes, followed by spleen and lymph nodes, with intermediate to low levels in thymus, bone marrow, fetal liver, placenta, and lung, and no expression in heart, brain, skeletal muscle, kidney, or pancreas. Expression is also detected in monocyte/macrophage and Jurkat cell lines but not in other cell lines tested. High expression in mast cells.

Its subcellular location is the cell membrane. The protein localises to the cell projection. The protein resides in the ruffle membrane. Its function is as follows. Cell surface receptor that binds to the chondroitin sulfate moiety of glycosaminoglycan chains and promotes cell attachment. Promotes granulocyte chemotaxis, degranulation and adhesion. In macrophages, promotes the release of inflammatory cytokines, including IL8 and TNF. Signals probably through G-proteins. Is a regulator of mast cell degranulation. The polypeptide is Adhesion G protein-coupled receptor E2 (Homo sapiens (Human)).